A 612-amino-acid chain; its full sequence is MAAAGRLPSSWALFSPLLAGLALLGVGPVPARALHNVTAELFGAEAWGTLAAFGDLNSDKQTDLFVLRERNDLIVFLADQNAPYFKPKVKVSFKNHSALITSVVPGDYDGDSQMDVLLTYLPKNYAKSELGAVIFWGQNQTLDPNNMTILNRTFQDEPLIMDFNGDLIPDIFGITNESNQPQILLGGNLSWHPALTTTSKMRIPHSHAFIDLTEDFTADLFLTTLNATTSTFQFEIWENLDGNFSVSTILEKPQNMMVVGQSAFADFDGDGHMDHLLPGCEDKNCQKSTIYLVRSGMKQWVPVLQDFSNKGTLWGFVPFVDEQQPTEIPIPITLHIGDYNMDGYPDALVILKNTSGSNQQAFLLENVPCNNASCEEARRMFKVYWELTDLNQIKDAMVATFFDIYEDGILDIVVLSKGYTKNDFAIHTLKNNFEADAYFVKVIVLSGLCSNDCPRKITPFGVNQPGPYIMYTTVDANGYLKNGSAGQLSQSAHLALQLPYNVLGLGRSANFLDHLYVGIPRPSGEKSIRKQEWTAIIPNSQLIVIPYPHNVPRSWSAKLYLTPSNIVLLTAIALIGVCVFILAIIGILHWQEKKADDREKRQEAHRFHFDAM.

Positions 1 to 33 (MAAAGRLPSSWALFSPLLAGLALLGVGPVPARA) are cleaved as a signal peptide. Residues N36, N95, N139, N146, N151, N176, N188, N226, and N243 are each glycosylated (N-linked (GlcNAc...) asparagine). Residues 258 to 293 (VVGQSAFADFDGDGHMDHLLPGCEDKNCQKSTIYLV) form an FG-GAP; atypical repeat. 3 N-linked (GlcNAc...) asparagine glycosylation sites follow: N353, N371, and N482. Residues 567-587 (VLLTAIALIGVCVFILAIIGI) traverse the membrane as a helical segment.

Belongs to the TIP family. Interacts with RUVBL1, RUVBL2 and alpha-tubulin. In terms of tissue distribution, ubiquitously expressed.

It localises to the secreted. The protein resides in the membrane. In terms of biological role, modulator of T-cell function. Has a protective effect in graft versus host disease model. The sequence is that of T-cell immunomodulatory protein from Homo sapiens (Human).